The following is a 598-amino-acid chain: Peroxisomal multifunctional enzyme type 2 (598 aa).

The segment at 1-309 (MSSSDGKLRY…LEVLEKLKEG (309 aa)) is (3R)-hydroxyacyl-CoA dehydrogenase. NAD(+) contacts are provided by residues 16–40 (VVTG…AKVV), Leu24, Asp43, 78–79 (SV), and Asn102. Ser154 provides a ligand contact to substrate. Tyr167 (proton acceptor) is an active-site residue. Residues 167-171 (YTAAK) and 199-202 (AASR) contribute to the NAD(+) site. The interval 310–598 (GGDAIEDAFE…VDLKSSQAKL (289 aa)) is enoyl-CoA hydratase 2. Residues 390-391 (HG), Lys419, 496-501 (DKNPLH), Gly519, and Phe549 contribute to the (3R)-3-hydroxydecanoyl-CoA site. One can recognise a MaoC-like domain in the interval 469-586 (PAPNRQPDAT…VETGKEVISG (118 aa)). The Microbody targeting signal signature appears at 596-598 (AKL).

The protein belongs to the short-chain dehydrogenases/reductases (SDR) family. In terms of assembly, homodimer.

The protein localises to the peroxisome. The catalysed reaction is a (3R)-3-hydroxyacyl-CoA + NAD(+) = a 3-oxoacyl-CoA + NADH + H(+). It catalyses the reaction a (3R)-3-hydroxyacyl-CoA = a (2E)-enoyl-CoA + H2O. It participates in lipid metabolism; fatty acid beta-oxidation. Functionally, bifunctional enzyme acting on the peroxisomal beta-oxidation pathway for fatty acids. The chain is Peroxisomal multifunctional enzyme type 2 from Drosophila melanogaster (Fruit fly).